Reading from the N-terminus, the 446-residue chain is MIKIYFIAGEVSGDFVGGRIMQHLKNNTGVQLNSPVSSFVNDAVQFVGVGGKYMEEAGSFKSLFPITSINLMGFVEILPHIFKLKKLIDKTVEDIINSKADLLITIDSPGFTYRVAKRVRKLLPKLKMIHIVAPSVWAYKEGRAVKYAKIYDCLFALLPFEPPYFTKVGLDCRYIGHPIMEQEFYSDKIALREEFKIDENERVLCVTLGSRKGEILRHLSVFVSSIEEIFKSCNNLKVIFTLANPAHEAIIKPFLEDVKFNYLFSSERLKIYAVADVALAKSGTNTLEIAASGTPMIVAYKVNLISFFIIRLLIKIKYVTLINIIADKEIIPEFIQFNCRANLISNKLQELLFNSKKAYEQVIESQKILQQLGFKSNRLQLNSESFRHDEFKGKLARCTKVREHRLSLENSLVSSDRDDAVPSYIAAAIIKQEFLEPKIKLLKEKD.

In terms of domain architecture, RPE3 insert spans 379 to 418; the sequence is LQLNSESFRHDEFKGKLARCTKVREHRLSLENSLVSSDRD.

Belongs to the LpxB family.

It catalyses the reaction a lipid X + a UDP-2-N,3-O-bis[(3R)-3-hydroxyacyl]-alpha-D-glucosamine = a lipid A disaccharide + UDP + H(+). It functions in the pathway bacterial outer membrane biogenesis; LPS lipid A biosynthesis. Condensation of UDP-2,3-diacylglucosamine and 2,3-diacylglucosamine-1-phosphate to form lipid A disaccharide, a precursor of lipid A, a phosphorylated glycolipid that anchors the lipopolysaccharide to the outer membrane of the cell. The sequence is that of Lipid-A-disaccharide synthase (lpxB) from Rickettsia conorii (strain ATCC VR-613 / Malish 7).